A 277-amino-acid chain; its full sequence is Phosphatidylglycerol--prolipoprotein diacylglyceryl transferase (277 aa).

4 helical membrane-spanning segments follow: residues 15–35, 50–70, 89–109, and 112–132; these read IHVR…TFMS, IDLL…YYVI, GGIA…VFCY, and FLPP…AQVL. R134 contacts a 1,2-diacyl-sn-glycero-3-phospho-(1'-sn-glycerol). Transmembrane regions (helical) follow at residues 174–194, 204–224, and 234–254; these read KPTF…ILSL, GEVF…VEGM, and VIRV…ILFV.

The protein belongs to the Lgt family.

It localises to the cell membrane. It catalyses the reaction L-cysteinyl-[prolipoprotein] + a 1,2-diacyl-sn-glycero-3-phospho-(1'-sn-glycerol) = an S-1,2-diacyl-sn-glyceryl-L-cysteinyl-[prolipoprotein] + sn-glycerol 1-phosphate + H(+). The protein operates within protein modification; lipoprotein biosynthesis (diacylglyceryl transfer). Functionally, catalyzes the transfer of the diacylglyceryl group from phosphatidylglycerol to the sulfhydryl group of the N-terminal cysteine of a prolipoprotein, the first step in the formation of mature lipoproteins. The protein is Phosphatidylglycerol--prolipoprotein diacylglyceryl transferase of Lactobacillus delbrueckii subsp. bulgaricus (strain ATCC 11842 / DSM 20081 / BCRC 10696 / JCM 1002 / NBRC 13953 / NCIMB 11778 / NCTC 12712 / WDCM 00102 / Lb 14).